The sequence spans 249 residues: 1-(5-phosphoribosyl)-5-[(5-phosphoribosylamino)methylideneamino] imidazole-4-carboxamide isomerase (249 aa).

Asp-8 acts as the Proton acceptor in catalysis. Asp-129 functions as the Proton donor in the catalytic mechanism.

Belongs to the HisA/HisF family.

It is found in the cytoplasm. It carries out the reaction 1-(5-phospho-beta-D-ribosyl)-5-[(5-phospho-beta-D-ribosylamino)methylideneamino]imidazole-4-carboxamide = 5-[(5-phospho-1-deoxy-D-ribulos-1-ylimino)methylamino]-1-(5-phospho-beta-D-ribosyl)imidazole-4-carboxamide. Its pathway is amino-acid biosynthesis; L-histidine biosynthesis; L-histidine from 5-phospho-alpha-D-ribose 1-diphosphate: step 4/9. In Nitratidesulfovibrio vulgaris (strain ATCC 29579 / DSM 644 / CCUG 34227 / NCIMB 8303 / VKM B-1760 / Hildenborough) (Desulfovibrio vulgaris), this protein is 1-(5-phosphoribosyl)-5-[(5-phosphoribosylamino)methylideneamino] imidazole-4-carboxamide isomerase.